The following is a 459-amino-acid chain: MLFLLFLLVAPIYAGLILPTKPSNDPFYNAPAGFEKAAVGEILQSRKTPKPITGVFVPVKIQNSWQLLVRSEDSFGNPNVIVTTVMEPFNADPSKLASYQVFEDSAKADCAPSYALQFGSDVTTIATQVETYLLAPLLDQGYYVVSPDYEGPKSTFTVGKQSGQAVLNSIRAALKSGKITNLAEDAKVVMWGYSGGSLASGWAAALQPNYAPELGGNLLGAALGGFVTNITATAEATDGTVFAGIMANALGGVANEYPEFKQILQNDTDKQSVFDQFDNHCLADGVINYIGKHFLSGTNKIFKSGWNILKNPTISKIVEDNGLVYQKQLVPKIPILIYHGAIDQIVPIVNVKKTYQNWCDAGIASLEFSEDATNGHITETIVGAPVALTWIINRFNGKQTVSGCQHVKRTSNFEYPNIPPSILNYFKAALNILIQKGLGPDIQKDQVNPDGLKKIPILV.

An N-terminal signal peptide occupies residues 1 to 14 (MLFLLFLLVAPIYA). A disulfide bridge connects residues Cys-110 and Cys-281. Ser-194 acts as the Charge relay system in catalysis. Asn-229 and Asn-266 each carry an N-linked (GlcNAc...) asparagine glycan. Catalysis depends on charge relay system residues Asp-343 and His-376. A disulfide bridge links Cys-359 with Cys-404.

This sequence belongs to the AB hydrolase superfamily. Lipase family. Class Lip subfamily.

It localises to the secreted. The enzyme catalyses a triacylglycerol + H2O = a diacylglycerol + a fatty acid + H(+). Functionally, secreted lipase that is able to hydrolyze both the neutral triacylglycerols and the monopalmitate ester Tween 40, allowing the use of hydrolyzed products as carbon sources. Has broad lipolytic activity, which may be important for colonization and subsequent infection, therefore contributing to the persistence and virulence in human tissue. The chain is Lipase 4 from Candida albicans (strain SC5314 / ATCC MYA-2876) (Yeast).